The sequence spans 727 residues: Elongation factor 2 (727 aa).

In terms of domain architecture, tr-type G spans 19-260; it reads EQIRNMGICA…MSIKHLPNPL (242 aa). GTP is bound by residues 28-35, 94-98, and 148-151; these read AHIDHGKT, DTPGH, and NKVD. At H603 the chain carries Diphthamide.

The protein belongs to the TRAFAC class translation factor GTPase superfamily. Classic translation factor GTPase family. EF-G/EF-2 subfamily.

It is found in the cytoplasm. Catalyzes the GTP-dependent ribosomal translocation step during translation elongation. During this step, the ribosome changes from the pre-translocational (PRE) to the post-translocational (POST) state as the newly formed A-site-bound peptidyl-tRNA and P-site-bound deacylated tRNA move to the P and E sites, respectively. Catalyzes the coordinated movement of the two tRNA molecules, the mRNA and conformational changes in the ribosome. In Methanococcus maripaludis (strain DSM 14266 / JCM 13030 / NBRC 101832 / S2 / LL), this protein is Elongation factor 2.